Consider the following 151-residue polypeptide: SsrA-binding protein (151 aa).

The tract at residues 132 to 151 is disordered; sequence KRQTIKKRDQDREIHRKYGI.

Belongs to the SmpB family.

Its subcellular location is the cytoplasm. In terms of biological role, required for rescue of stalled ribosomes mediated by trans-translation. Binds to transfer-messenger RNA (tmRNA), required for stable association of tmRNA with ribosomes. tmRNA and SmpB together mimic tRNA shape, replacing the anticodon stem-loop with SmpB. tmRNA is encoded by the ssrA gene; the 2 termini fold to resemble tRNA(Ala) and it encodes a 'tag peptide', a short internal open reading frame. During trans-translation Ala-aminoacylated tmRNA acts like a tRNA, entering the A-site of stalled ribosomes, displacing the stalled mRNA. The ribosome then switches to translate the ORF on the tmRNA; the nascent peptide is terminated with the 'tag peptide' encoded by the tmRNA and targeted for degradation. The ribosome is freed to recommence translation, which seems to be the essential function of trans-translation. This Lactobacillus johnsonii (strain CNCM I-12250 / La1 / NCC 533) protein is SsrA-binding protein.